The chain runs to 311 residues: Probable manganese-dependent inorganic pyrophosphatase (311 aa).

Histidine 9, aspartate 13, aspartate 15, aspartate 77, histidine 99, and aspartate 151 together coordinate Mn(2+).

It belongs to the PPase class C family. Mn(2+) is required as a cofactor.

It is found in the cytoplasm. The enzyme catalyses diphosphate + H2O = 2 phosphate + H(+). This Streptococcus pyogenes serotype M1 protein is Probable manganese-dependent inorganic pyrophosphatase.